The primary structure comprises 262 residues: Acyl-[acyl-carrier-protein]--UDP-N-acetylglucosamine O-acyltransferase (262 aa).

Belongs to the transferase hexapeptide repeat family. LpxA subfamily. In terms of assembly, homotrimer.

The protein localises to the cytoplasm. It carries out the reaction a (3R)-hydroxyacyl-[ACP] + UDP-N-acetyl-alpha-D-glucosamine = a UDP-3-O-[(3R)-3-hydroxyacyl]-N-acetyl-alpha-D-glucosamine + holo-[ACP]. It participates in glycolipid biosynthesis; lipid IV(A) biosynthesis; lipid IV(A) from (3R)-3-hydroxytetradecanoyl-[acyl-carrier-protein] and UDP-N-acetyl-alpha-D-glucosamine: step 1/6. In terms of biological role, involved in the biosynthesis of lipid A, a phosphorylated glycolipid that anchors the lipopolysaccharide to the outer membrane of the cell. The polypeptide is Acyl-[acyl-carrier-protein]--UDP-N-acetylglucosamine O-acyltransferase (Burkholderia lata (strain ATCC 17760 / DSM 23089 / LMG 22485 / NCIMB 9086 / R18194 / 383)).